A 597-amino-acid chain; its full sequence is Putative diflavin flavoprotein A 3 (597 aa).

The tract at residues 59–254 (QRGTTANSYL…YPAQTYAPSH (196 aa)) is zinc metallo-hydrolase. The region spanning 283-421 (VALIYASAYG…MCEEAGTDFA (139 aa)) is the Flavodoxin-like domain. Positions 449–597 (LGRLVGSLCV…VHHRKSGDHY (149 aa)) are flavodoxin-reductase-like.

In the N-terminal section; belongs to the zinc metallo-hydrolase group 3 family. It in the C-terminal section; belongs to the flavodoxin reductase family. Requires Fe cation as cofactor.

Mediates electron transfer from NADH to oxygen, reducing it to water. This modular protein has 3 redox cofactors, in other organisms the same activity requires 2 or 3 proteins. This Synechocystis sp. (strain ATCC 27184 / PCC 6803 / Kazusa) protein is Putative diflavin flavoprotein A 3 (dfa3).